The chain runs to 32 residues: Cytochrome b6-f complex subunit 8 (32 aa).

A helical membrane pass occupies residues 6-26 (IVGITWAALMVVFTFSLSLVV).

It belongs to the PetN family. As to quaternary structure, the 4 large subunits of the cytochrome b6-f complex are cytochrome b6, subunit IV (17 kDa polypeptide, PetD), cytochrome f and the Rieske protein, while the 4 small subunits are PetG, PetL, PetM and PetN. The complex functions as a dimer.

The protein resides in the plastid. The protein localises to the chloroplast thylakoid membrane. In terms of biological role, component of the cytochrome b6-f complex, which mediates electron transfer between photosystem II (PSII) and photosystem I (PSI), cyclic electron flow around PSI, and state transitions. The polypeptide is Cytochrome b6-f complex subunit 8 (Pinus koraiensis (Korean pine)).